Consider the following 342-residue polypeptide: MLVLALESSCDETAAAVVKDGRTVLSSIVASQISVHAEYGGVVPEIASRKHLESVSFVVEQALAEAGVGLDRIDGIAVTQGPGLAGALLVGISVAKGLAFGRSLPLVGVNHIEGHLLAVFLEAPVQFPFIALAVSGGHSHLYRVDGIGRYQTLGQTVDDAAGEAFDKVAKLIGLPYPGGVAIDRLAVSGDPKAIKFPRPLLHDGTFNFSFSGLKTAVLTHVGKHPEAKEAGINDLAASFQAAVCEVLTKKTAAAVAATGIKRLVVAGGVACNSALRRSMAEYAAANGVELSIPSPALCADNAAMIAVPGDYYLGLGVTSGFDLDALPVWPLDKLALRLKEHC.

Residues His111 and His115 each contribute to the Fe cation site. Substrate-binding positions include 133-137 (AVSGG), Asp166, Gly179, Asp183, and Asn272. Residue Asp300 participates in Fe cation binding.

The protein belongs to the KAE1 / TsaD family. Requires Fe(2+) as cofactor.

The protein localises to the cytoplasm. It catalyses the reaction L-threonylcarbamoyladenylate + adenosine(37) in tRNA = N(6)-L-threonylcarbamoyladenosine(37) in tRNA + AMP + H(+). Its function is as follows. Required for the formation of a threonylcarbamoyl group on adenosine at position 37 (t(6)A37) in tRNAs that read codons beginning with adenine. Is involved in the transfer of the threonylcarbamoyl moiety of threonylcarbamoyl-AMP (TC-AMP) to the N6 group of A37, together with TsaE and TsaB. TsaD likely plays a direct catalytic role in this reaction. In Geobacter sp. (strain M21), this protein is tRNA N6-adenosine threonylcarbamoyltransferase.